A 143-amino-acid chain; its full sequence is Nucleoside diphosphate kinase (143 aa).

Residues lysine 11, phenylalanine 59, arginine 87, threonine 93, arginine 104, and asparagine 114 each coordinate ATP. Histidine 117 acts as the Pros-phosphohistidine intermediate in catalysis.

The protein belongs to the NDK family. Homotetramer. Mg(2+) is required as a cofactor.

It is found in the cytoplasm. It carries out the reaction a 2'-deoxyribonucleoside 5'-diphosphate + ATP = a 2'-deoxyribonucleoside 5'-triphosphate + ADP. The catalysed reaction is a ribonucleoside 5'-diphosphate + ATP = a ribonucleoside 5'-triphosphate + ADP. Functionally, major role in the synthesis of nucleoside triphosphates other than ATP. The ATP gamma phosphate is transferred to the NDP beta phosphate via a ping-pong mechanism, using a phosphorylated active-site intermediate. This Escherichia coli O7:K1 (strain IAI39 / ExPEC) protein is Nucleoside diphosphate kinase.